Reading from the N-terminus, the 736-residue chain is Elongation factor 2 (736 aa).

Residues 18–261 (EQIRNIGITA…MVVKHIPNPR (244 aa)) enclose the tr-type G domain. GTP is bound by residues 27-34 (AHVDHGKT), 93-97 (DTPGH), and 147-150 (NKID). Position 602 is a diphthamide (His602).

The protein belongs to the TRAFAC class translation factor GTPase superfamily. Classic translation factor GTPase family. EF-G/EF-2 subfamily.

Its subcellular location is the cytoplasm. Its function is as follows. Catalyzes the GTP-dependent ribosomal translocation step during translation elongation. During this step, the ribosome changes from the pre-translocational (PRE) to the post-translocational (POST) state as the newly formed A-site-bound peptidyl-tRNA and P-site-bound deacylated tRNA move to the P and E sites, respectively. Catalyzes the coordinated movement of the two tRNA molecules, the mRNA and conformational changes in the ribosome. The polypeptide is Elongation factor 2 (Desulfurococcus amylolyticus (strain DSM 18924 / JCM 16383 / VKM B-2413 / 1221n) (Desulfurococcus kamchatkensis)).